A 136-amino-acid chain; its full sequence is Large ribosomal subunit protein uL16 (136 aa).

This sequence belongs to the universal ribosomal protein uL16 family. As to quaternary structure, part of the 50S ribosomal subunit.

Functionally, binds 23S rRNA and is also seen to make contacts with the A and possibly P site tRNAs. The protein is Large ribosomal subunit protein uL16 of Rickettsia africae (strain ESF-5).